Reading from the N-terminus, the 122-residue chain is Large ribosomal subunit protein bL12 (122 aa).

The disordered stretch occupies residues 96–122; that stretch reads APKSLKTGLSKDEANEMKKKLEDAGAT. Over residues 104-122 the composition is skewed to basic and acidic residues; it reads LSKDEANEMKKKLEDAGAT.

It belongs to the bacterial ribosomal protein bL12 family. As to quaternary structure, homodimer. Part of the ribosomal stalk of the 50S ribosomal subunit. Forms a multimeric L10(L12)X complex, where L10 forms an elongated spine to which 2 to 4 L12 dimers bind in a sequential fashion. Binds GTP-bound translation factors.

Functionally, forms part of the ribosomal stalk which helps the ribosome interact with GTP-bound translation factors. Is thus essential for accurate translation. The polypeptide is Large ribosomal subunit protein bL12 (Liberibacter asiaticus (Citrus greening disease)).